The chain runs to 576 residues: Rop guanine nucleotide exchange factor 13 (576 aa).

The 367-residue stretch at 119–485 (KSCYFAYVTE…QLTQNPELAM (367 aa)) folds into the PRONE domain. Residues 557–570 (KTTYLESLGTTRSP) are compositionally biased toward polar residues. A disordered region spans residues 557 to 576 (KTTYLESLGTTRSPTAGRYS).

As to quaternary structure, interacts with PRK6. In terms of tissue distribution, specifically expressed in mature flowers.

Guanine-nucleotide exchange factor (GEF) that acts as an activator of Rop (Rho of plants) GTPases by promoting the exchange of GDP for GTP. The chain is Rop guanine nucleotide exchange factor 13 from Arabidopsis thaliana (Mouse-ear cress).